The primary structure comprises 485 residues: Zinc finger protein 639 (485 aa).

Residues Met-1 to His-14 are compositionally biased toward basic residues. Residues Met-1–Asp-20 are disordered. Ser-60 carries the phosphoserine modification. Lys-76 participates in a covalent cross-link: Glycyl lysine isopeptide (Lys-Gly) (interchain with G-Cter in SUMO2). Residue Ser-88 is modified to Phosphoserine. Residues Lys-177, Lys-181, and Lys-226 each participate in a glycyl lysine isopeptide (Lys-Gly) (interchain with G-Cter in SUMO2) cross-link. 8 consecutive C2H2-type zinc fingers follow at residues Tyr-204–His-227, Asn-233–His-255, Tyr-260–His-283, Tyr-289–His-311, Phe-374–His-397, His-403–His-425, Tyr-431–His-454, and His-460–His-482. Residues Lys-371–Ser-455 form an interaction with CTNNA2 region.

This sequence belongs to the krueppel C2H2-type zinc-finger protein family. As to quaternary structure, interacts with CTNNA2.

It is found in the nucleus. Binds DNA and may function as a transcriptional repressor. In Homo sapiens (Human), this protein is Zinc finger protein 639 (ZNF639).